The chain runs to 421 residues: UDP-N-acetylglucosamine 1-carboxyvinyltransferase 2 (421 aa).

22 to 23 (KN) contributes to the phosphoenolpyruvate binding site. Arg95 lines the UDP-N-acetyl-alpha-D-glucosamine pocket. The active-site Proton donor is Cys119. Cys119 carries the post-translational modification 2-(S-cysteinyl)pyruvic acid O-phosphothioketal. UDP-N-acetyl-alpha-D-glucosamine is bound by residues 124-128 (RPIEQ), Asp308, and Val330.

This sequence belongs to the EPSP synthase family. MurA subfamily.

It is found in the cytoplasm. The enzyme catalyses phosphoenolpyruvate + UDP-N-acetyl-alpha-D-glucosamine = UDP-N-acetyl-3-O-(1-carboxyvinyl)-alpha-D-glucosamine + phosphate. Its pathway is cell wall biogenesis; peptidoglycan biosynthesis. In terms of biological role, cell wall formation. Adds enolpyruvyl to UDP-N-acetylglucosamine. This Staphylococcus haemolyticus (strain JCSC1435) protein is UDP-N-acetylglucosamine 1-carboxyvinyltransferase 2.